We begin with the raw amino-acid sequence, 474 residues long: uncharacterized protein (474 aa).

Residues 3-23 (LTLWLVLGAVGVGAVGTGVGF) form a helical membrane-spanning segment. The segment at 171–296 (VSDGSSSKTR…KETKDRTKVD (126 aa)) is disordered. A compositionally biased stretch (basic residues) spans 180–210 (RTPKKTKTSKKKPIKKKSSKSKSSKGSKKQK). Residues 231-253 (TRSQSKQQKGQEQATDQTDSEGV) show a composition bias toward polar residues. The span at 257-266 (EGADNTDTEL) shows a compositional bias: acidic residues. Positions 267 to 281 (VETTAETTEQEATTK) are enriched in low complexity. The span at 282 to 296 (STKDTKETKDRTKVD) shows a compositional bias: basic and acidic residues.

Its subcellular location is the membrane. This is an uncharacterized protein from Mycoplasma pneumoniae (strain ATCC 29342 / M129 / Subtype 1) (Mycoplasmoides pneumoniae).